A 133-amino-acid polypeptide reads, in one-letter code: Stage III sporulation protein AD (133 aa).

3 helical membrane-spanning segments follow: residues 2-22 (QIDI…SLIV), 29-49 (FAFL…VDQI), and 108-128 (ILIL…ILGL).

It localises to the cell membrane. In Bacillus subtilis (strain 168), this protein is Stage III sporulation protein AD (spoIIIAD).